The following is a 64-amino-acid chain: Large ribosomal subunit protein bL35 (64 aa).

Belongs to the bacterial ribosomal protein bL35 family.

In Acinetobacter baylyi (strain ATCC 33305 / BD413 / ADP1), this protein is Large ribosomal subunit protein bL35.